The chain runs to 109 residues: Large ribosomal subunit protein uL22 (109 aa).

The protein belongs to the universal ribosomal protein uL22 family. Part of the 50S ribosomal subunit.

This protein binds specifically to 23S rRNA; its binding is stimulated by other ribosomal proteins, e.g. L4, L17, and L20. It is important during the early stages of 50S assembly. It makes multiple contacts with different domains of the 23S rRNA in the assembled 50S subunit and ribosome. Functionally, the globular domain of the protein is located near the polypeptide exit tunnel on the outside of the subunit, while an extended beta-hairpin is found that lines the wall of the exit tunnel in the center of the 70S ribosome. The sequence is that of Large ribosomal subunit protein uL22 from Thiobacillus denitrificans (strain ATCC 25259 / T1).